A 440-amino-acid polypeptide reads, in one-letter code: GTPase Der (440 aa).

2 EngA-type G domains span residues 4 to 169 (PVVA…PEED) and 178 to 353 (IKVA…DQAA). GTP contacts are provided by residues 10–17 (GRPNVGKS), 57–61 (DTGGI), 120–123 (NKVD), 184–191 (GKPNVGKS), 231–235 (DTAGI), and 296–299 (NKWD). One can recognise a KH-like domain in the interval 354–438 (MRISTGVLND…PIKFILREKE (85 aa)).

It belongs to the TRAFAC class TrmE-Era-EngA-EngB-Septin-like GTPase superfamily. EngA (Der) GTPase family. Associates with the 50S ribosomal subunit.

GTPase that plays an essential role in the late steps of ribosome biogenesis. The protein is GTPase Der of Acetivibrio thermocellus (strain ATCC 27405 / DSM 1237 / JCM 9322 / NBRC 103400 / NCIMB 10682 / NRRL B-4536 / VPI 7372) (Clostridium thermocellum).